The chain runs to 322 residues: Outer membrane protein assembly factor BamC (322 aa).

A signal peptide spans methionine 1 to alanine 22.

This sequence belongs to the BamC family. Part of the Bam complex.

It localises to the cell outer membrane. Part of the outer membrane protein assembly complex, which is involved in assembly and insertion of beta-barrel proteins into the outer membrane. The sequence is that of Outer membrane protein assembly factor BamC from Oceanimonas sp. (strain GK1 / IBRC-M 10197).